The sequence spans 430 residues: Divergent protein kinase domain 2A (430 aa).

A signal peptide spans 1 to 35 (MWRLVPLKLGRLSRALKLAALGSLLVLMLLHSPSL).

This sequence belongs to the DIPK family. As to expression, expressed in heart, brain, liver, spleen, kidney, lung, thymus, testis, ovary and muscle.

The protein resides in the golgi apparatus. Its subcellular location is the cytoplasmic vesicle. It localises to the COPI-coated vesicle. It is found in the secreted. Functionally, may play a role in cardiomyocyte proliferation through paracrine signaling and activation of the PI3-kinase signaling cascade. This chain is Divergent protein kinase domain 2A (Dipk2a), found in Mus musculus (Mouse).